The primary structure comprises 868 residues: Probable inorganic carbon transporter subunit DabA (868 aa).

C392, D394, H574, and C589 together coordinate Zn(2+).

Belongs to the inorganic carbon transporter (TC 9.A.2) DabA family. As to quaternary structure, forms a complex with DabB. Zn(2+) serves as cofactor.

Its subcellular location is the cell membrane. Its function is as follows. Part of an energy-coupled inorganic carbon pump. The sequence is that of Probable inorganic carbon transporter subunit DabA from Bacillus cereus (strain B4264).